Reading from the N-terminus, the 908-residue chain is Structural core protein VP2 (908 aa).

The segment covering 1–19 (MANPQNRVQTERQQNNSSP) has biased composition (polar residues). The disordered stretch occupies residues 1–25 (MANPQNRVQTERQQNNSSPYLRGDE).

It belongs to the orbivirus VP3 family.

Its subcellular location is the virion. The chain is Structural core protein VP2 (Segment-2) from Ixodes (gulls).